Reading from the N-terminus, the 326-residue chain is G-protein coupled receptor 1 (326 aa).

An N-acetylserine modification is found at Ser-2. Residues 2–23 (SAVLTAGGGLTAGDRSIITAIN) lie on the Extracellular side of the membrane. A helical transmembrane segment spans residues 24–44 (TGASSLSFVGSAFIVLCYCLF). The Cytoplasmic portion of the chain corresponds to 45–51 (KELRKFS). A helical transmembrane segment spans residues 52–72 (FKLVFYLALSDMLCSFFLIVG). Over 73 to 84 (DPSKGFICYAQG) the chain is Extracellular. Cys-80 and Cys-151 are joined by a disulfide. The helical transmembrane segment at 85–105 (YTTHFFCVASFLWTTTIAFTL) threads the bilayer. The Cytoplasmic segment spans residues 106 to 120 (HRTVVKHKTDVEDLE). Residues 121 to 141 (AMFHLYVWGTSLVVTVIRSFG) form a helical membrane-spanning segment. The Extracellular segment spans residues 142–160 (NNHSHLGPWCWTQTGLKGK). N-linked (GlcNAc...) asparagine glycosylation occurs at Asn-143. The chain crosses the membrane as a helical span at residues 161-181 (AVHFLTFYAPLWGAILYNGFT). Residues 182–213 (YFQVIRMLRNARRMAVGMSDRVDQFDNRAELK) are Cytoplasmic-facing. Residues 214 to 234 (VLNRWGYYPLILIGSWAFGTI) form a helical membrane-spanning segment. The Extracellular portion of the chain corresponds to 235–246 (NRIHDFIEPGHK). Residues 247–267 (IFWLSVLDVGTAALMGLFNSI) form a helical membrane-spanning segment. The Cytoplasmic portion of the chain corresponds to 268–326 (AYGFNSSVRRAIHERLELFLPERLYRWLPSNFRPKNHLILHQQQQQRSEMVSLKTEDQQ).

Belongs to the G-protein coupled receptor 2 family. In terms of assembly, interacts with GPA1. In terms of tissue distribution, mostly present in the meristematic regions. Expressed at low levels in seedlings, vascular tissues of cotyledons, hypocotyl, and roots, stems, leaves, flowering buds and siliques. In dark-grown seedlings, localized in the cotyledons and the hook.

It is found in the cell membrane. Functionally, together with GPA1, may regulate the cell cycle via a signaling cascade that uses phosphatidylinositol-specific phospholipase C (PI-PLC) as an effector and inositol 1,4,5-trisphosphate(IP(3)) as a second messenger. Promotes PI-PLC activity and IP(3) accumulation. Involved in the blue light (BL) signaling. Together with GPA1 and ADT3, required for BL-mediated synthesis of phenylpyruvate and subsequently of phenylalanine (Phe), in etiolated seedlings. Probably involved in cytokinin signal transduction. Plays a positive role in gibberellin- (GA) and brassinosteroid- (BR) regulated seed germination, probably independently of a heterotrimeric G-protein. Mediates seed dormancy abolition, and promotes seed germination and flowering. The polypeptide is G-protein coupled receptor 1 (GCR1) (Arabidopsis thaliana (Mouse-ear cress)).